The sequence spans 336 residues: MIEADRLISASGGREEEVIDRAIRPKLLADYTGQDPVCEQMEIFIAAARQRGEALDHLLIFGPPGLGKTTLANIVANEMGVNIKTTSGPVLEKAGDLAALLTNLEPNDVLFIDEIHRLSPVVEEVLYPAMEDYQLDIMIGEGPAARSIKLDLPPFTLIGATTRAGSLTSPLRDRFGIVQRLEFYNVKDLTDIVARSARCLGLDMTEDGALEVARRSRGTPRIANRLLRRVRDFAQVKSDGRIDGPIAARAMDMLDVDNEGFDFMDRKLLLAVIDKFLGGPVGLDNLAAAIGEEKDTIEDVLEPYLIQQGYLQRTPRGRIATPRAYAHFGLQRPDEG.

Positions 4 to 184 (ADRLISASGG…FGIVQRLEFY (181 aa)) are large ATPase domain (RuvB-L). Residues Ile-23, Arg-24, Gly-65, Lys-68, Thr-69, Thr-70, 131–133 (EDY), Arg-174, Tyr-184, and Arg-221 each bind ATP. Thr-69 lines the Mg(2+) pocket. Residues 185–255 (NVKDLTDIVA…IAARAMDMLD (71 aa)) form a small ATPAse domain (RuvB-S) region. The segment at 258-336 (NEGFDFMDRK…HFGLQRPDEG (79 aa)) is head domain (RuvB-H). Arg-313 and Arg-318 together coordinate DNA.

It belongs to the RuvB family. In terms of assembly, homohexamer. Forms an RuvA(8)-RuvB(12)-Holliday junction (HJ) complex. HJ DNA is sandwiched between 2 RuvA tetramers; dsDNA enters through RuvA and exits via RuvB. An RuvB hexamer assembles on each DNA strand where it exits the tetramer. Each RuvB hexamer is contacted by two RuvA subunits (via domain III) on 2 adjacent RuvB subunits; this complex drives branch migration. In the full resolvosome a probable DNA-RuvA(4)-RuvB(12)-RuvC(2) complex forms which resolves the HJ.

The protein resides in the cytoplasm. It catalyses the reaction ATP + H2O = ADP + phosphate + H(+). In terms of biological role, the RuvA-RuvB-RuvC complex processes Holliday junction (HJ) DNA during genetic recombination and DNA repair, while the RuvA-RuvB complex plays an important role in the rescue of blocked DNA replication forks via replication fork reversal (RFR). RuvA specifically binds to HJ cruciform DNA, conferring on it an open structure. The RuvB hexamer acts as an ATP-dependent pump, pulling dsDNA into and through the RuvAB complex. RuvB forms 2 homohexamers on either side of HJ DNA bound by 1 or 2 RuvA tetramers; 4 subunits per hexamer contact DNA at a time. Coordinated motions by a converter formed by DNA-disengaged RuvB subunits stimulates ATP hydrolysis and nucleotide exchange. Immobilization of the converter enables RuvB to convert the ATP-contained energy into a lever motion, pulling 2 nucleotides of DNA out of the RuvA tetramer per ATP hydrolyzed, thus driving DNA branch migration. The RuvB motors rotate together with the DNA substrate, which together with the progressing nucleotide cycle form the mechanistic basis for DNA recombination by continuous HJ branch migration. Branch migration allows RuvC to scan DNA until it finds its consensus sequence, where it cleaves and resolves cruciform DNA. This Aeromonas hydrophila subsp. hydrophila (strain ATCC 7966 / DSM 30187 / BCRC 13018 / CCUG 14551 / JCM 1027 / KCTC 2358 / NCIMB 9240 / NCTC 8049) protein is Holliday junction branch migration complex subunit RuvB.